The following is a 351-amino-acid chain: Photosystem II D2 protein (351 aa).

A helical membrane pass occupies residues 39–59 (TAYLAVGGWMTGTTFVTSWYT). Histidine 116 contributes to the chlorophyll a binding site. Residues 123–139 (GFCLRQFEIARLVGIRP) traverse the membrane as a helical segment. Residues glutamine 128 and asparagine 141 each contribute to the pheophytin a site. The chain crosses the membrane as a helical span at residues 151–164 (VFVSVFLLYPLGQA). Residue histidine 196 coordinates chlorophyll a. The helical transmembrane segment at 206–226 (GALLCAIHGATVENTLFEDGD) threads the bilayer. 2 residues coordinate a plastoquinone: histidine 213 and phenylalanine 260. Histidine 213 contributes to the Fe cation binding site. Histidine 267 contributes to the Fe cation binding site. The helical transmembrane segment at 277–293 (GLWTSAIGIVGLALNLR) threads the bilayer.

This sequence belongs to the reaction center PufL/M/PsbA/D family. As to quaternary structure, PSII is composed of 1 copy each of membrane proteins PsbA, PsbB, PsbC, PsbD, PsbE, PsbF, PsbH, PsbI, PsbJ, PsbK, PsbL, PsbM, PsbT, PsbX, PsbY, PsbZ, Psb30/Ycf12, at least 3 peripheral proteins of the oxygen-evolving complex and a large number of cofactors. It forms dimeric complexes. It depends on The D1/D2 heterodimer binds P680, chlorophylls that are the primary electron donor of PSII, and subsequent electron acceptors. It shares a non-heme iron and each subunit binds pheophytin, quinone, additional chlorophylls, carotenoids and lipids. There is also a Cl(-1) ion associated with D1 and D2, which is required for oxygen evolution. The PSII complex binds additional chlorophylls, carotenoids and specific lipids. as a cofactor.

The protein localises to the plastid. It localises to the chloroplast thylakoid membrane. The catalysed reaction is 2 a plastoquinone + 4 hnu + 2 H2O = 2 a plastoquinol + O2. Functionally, photosystem II (PSII) is a light-driven water:plastoquinone oxidoreductase that uses light energy to abstract electrons from H(2)O, generating O(2) and a proton gradient subsequently used for ATP formation. It consists of a core antenna complex that captures photons, and an electron transfer chain that converts photonic excitation into a charge separation. The D1/D2 (PsbA/PsbD) reaction center heterodimer binds P680, the primary electron donor of PSII as well as several subsequent electron acceptors. D2 is needed for assembly of a stable PSII complex. The polypeptide is Photosystem II D2 protein (Phaeodactylum tricornutum (strain CCAP 1055/1)).